The following is a 138-amino-acid chain: Biopolymer transport protein exbD1 (138 aa).

The Cytoplasmic portion of the chain corresponds to 1 to 16; the sequence is MIKSSAKHNDFGLTPD. The chain crosses the membrane as a helical span at residues 17–37; it reads LTPLLDIIFIVMVFLLLTASV. The Periplasmic portion of the chain corresponds to 38–138; sequence RLESLEVALP…TQLLTEPSHS (101 aa).

This sequence belongs to the ExbD/TolR family. As to quaternary structure, the accessory proteins ExbB and ExbD seem to form a complex with TonB.

The protein resides in the cell inner membrane. Functionally, involved in the TonB-dependent energy-dependent transport of various receptor-bound substrates. This chain is Biopolymer transport protein exbD1 (exbD1), found in Vibrio cholerae serotype O1 (strain ATCC 39315 / El Tor Inaba N16961).